Consider the following 243-residue polypeptide: ATP synthase subunit b, mitochondrial (243 aa).

The protein belongs to the eukaryotic ATPase B chain family. F-type ATPases have 2 components, CF(1) - the catalytic core - and CF(0) - the membrane proton channel. CF(1) has five subunits: alpha(3), beta(3), gamma(1), delta(1), epsilon(1). CF(0) has three main subunits: a, b and c.

The protein localises to the mitochondrion. It is found in the mitochondrion inner membrane. Functionally, mitochondrial membrane ATP synthase (F(1)F(0) ATP synthase or Complex V) produces ATP from ADP in the presence of a proton gradient across the membrane which is generated by electron transport complexes of the respiratory chain. F-type ATPases consist of two structural domains, F(1) - containing the extramembraneous catalytic core, and F(0) - containing the membrane proton channel, linked together by a central stalk and a peripheral stalk. During catalysis, ATP synthesis in the catalytic domain of F(1) is coupled via a rotary mechanism of the central stalk subunits to proton translocation. Part of the complex F(0) domain and the peripheric stalk, which acts as a stator to hold the catalytic alpha(3)beta(3) subcomplex and subunit a/ATP6 static relative to the rotary elements. In Drosophila melanogaster (Fruit fly), this protein is ATP synthase subunit b, mitochondrial.